A 290-amino-acid polypeptide reads, in one-letter code: Light-independent protochlorophyllide reductase iron-sulfur ATP-binding protein (290 aa).

Residues 10–15 (GIGKST) and Lys-39 contribute to the ATP site. Residue Ser-14 participates in Mg(2+) binding. [4Fe-4S] cluster contacts are provided by Cys-95 and Cys-129. Residue 180–181 (NR) participates in ATP binding.

The protein belongs to the NifH/BchL/ChlL family. As to quaternary structure, homodimer. Protochlorophyllide reductase is composed of three subunits; ChlL, ChlN and ChlB. It depends on [4Fe-4S] cluster as a cofactor.

The protein localises to the plastid. It localises to the chloroplast. It catalyses the reaction chlorophyllide a + oxidized 2[4Fe-4S]-[ferredoxin] + 2 ADP + 2 phosphate = protochlorophyllide a + reduced 2[4Fe-4S]-[ferredoxin] + 2 ATP + 2 H2O. The protein operates within porphyrin-containing compound metabolism; chlorophyll biosynthesis (light-independent). In terms of biological role, component of the dark-operative protochlorophyllide reductase (DPOR) that uses Mg-ATP and reduced ferredoxin to reduce ring D of protochlorophyllide (Pchlide) to form chlorophyllide a (Chlide). This reaction is light-independent. The L component serves as a unique electron donor to the NB-component of the complex, and binds Mg-ATP. This Angiopteris evecta (Mule's foot fern) protein is Light-independent protochlorophyllide reductase iron-sulfur ATP-binding protein.